The chain runs to 296 residues: Elongation factor Ts (296 aa).

The interval 79–82 (TDFV) is involved in Mg(2+) ion dislocation from EF-Tu.

The protein belongs to the EF-Ts family.

Its subcellular location is the cytoplasm. In terms of biological role, associates with the EF-Tu.GDP complex and induces the exchange of GDP to GTP. It remains bound to the aminoacyl-tRNA.EF-Tu.GTP complex up to the GTP hydrolysis stage on the ribosome. This chain is Elongation factor Ts (tsf), found in Spiroplasma citri.